The following is a 290-amino-acid chain: TP53-target gene 5 protein (290 aa).

Basic residues predominate over residues 1 to 13; it reads MSPSAKKRPKNSR. Disordered regions lie at residues 1 to 29 and 114 to 178; these read MSPS…TEQP and KLES…RQPL. 3 stretches are compositionally biased toward basic and acidic residues: residues 16-26, 114-130, and 138-167; these read KMQDEKLRDET, KLES…KEWK, and RNKE…RDDS.

Interacts with p53/TP53. In terms of tissue distribution, highly expressed in heart, brain and small intestine. Less abundant in skeletal muscle, spleen, prostate, ovary and colon. A smaller transcript is expressed specifically in the testis.

It is found in the cytoplasm. Its subcellular location is the nucleus. Its function is as follows. May play a significant role in p53/TP53-mediating signaling pathway. The sequence is that of TP53-target gene 5 protein (TP53TG5) from Homo sapiens (Human).